The chain runs to 342 residues: Epoxide hydrolase srdG (342 aa).

The 289-residue stretch at 44 to 332 folds into the AB hydrolase-1 domain; that stretch reads ATVLLLHGWP…LIHTPEEVNK (289 aa). Residue aspartate 122 is the Nucleophile of the active site. Histidine 320 acts as the Proton acceptor in catalysis.

It belongs to the AB hydrolase superfamily. Epoxide hydrolase family.

In terms of biological role, highly reducing polyketide synthase; part of the gene cluster that mediates the biosynthesis of sordarial, a salicylic aldehyde structurally related to the phytotoxin pyriculol. The most interesting aspect of this pathway is formation of an aromatic product from the highly reducing polyketide synthase srdA. SrdA synthesizes a reduced polyketide chain from one molecule of acetyl-CoA and five molecules of malonyl-CoA. The polyketide chain is then reductively released as an aldehyde. The oxidoreductases srdC, srdD and srdE then oxidize one of the hydroxy groups to facilitate the intramolecular aldol condensation, followed by dehydration to yield a salicylic aldehyde. This aldehyde can undergo facile reduction by endogenous reductases to yield the alcohol 1-hydroxy-2-hydroxymethyl-3-pent-1,3-dienylbenzene. The flavin-dependent srdI counteract against the propensity of the aldehydes to be reduced under physiological conditions and is responsible for reoxidizing 1-hydroxy-2-hydroxymethyl-3-pent-1,3-dienylbenzene back to the salicylic aldehyde. This salicylic aldehyde is then selectively epoxidized by the cupin-domain-containing oxidoreductase srdB to yield the epoxide, which can be hydrolyzed stereoselectively by the hydrolase srdG to give the final product sordarial. This is Epoxide hydrolase srdG from Neurospora crassa (strain ATCC 24698 / 74-OR23-1A / CBS 708.71 / DSM 1257 / FGSC 987).